Here is a 702-residue protein sequence, read N- to C-terminus: Autophagy-related protein 9 (702 aa).

The Cytoplasmic segment spans residues 1–205 (MFYQPAQNKK…GKGLSCIIVH (205 aa)). Residues 35 to 128 (QESLDSDEDE…SKQKPALPNF (94 aa)) are disordered. Positions 38 to 47 (LDSDEDESSP) are enriched in acidic residues. The segment covering 94 to 107 (SSKVPSKHPSPSFP) has biased composition (low complexity). The span at 108–120 (ETTSLRNLQNGSK) shows a compositional bias: polar residues. Residues 206–223 (RLFQILTVSFVIGFTTFI) form a helical membrane-spanning segment. Residues 224–251 (TSCIDWPAVTPHGSLAGVTKSQCIAQMS) are Lumenal-facing. The helical transmembrane segment at 252-270 (PITYLVLWLFLSFLLALWI) threads the bilayer. At 271–421 (YYLTDIPRLW…RRRFIVAGFL (151 aa)) the chain is on the cytoplasmic side. An intramembrane segment occupies 422–446 (NCLFAPIVAIYLVIHNFFRYFNEYH). The Cytoplasmic segment spans residues 447–496 (KNPGALSTRRYTPLALWTFREYNELQHFFDERINDSYAAASHYVSQFPDF). The chain crosses the membrane as a helical span at residues 497-522 (NMIRLFKYISFILGSFTAILVIITVF). Topologically, residues 523 to 537 (DPELMVTFEITKDRS) are lumenal. A helical membrane pass occupies residues 538–555 (VLFYLGLFGSLIAVSRSI). Over 556–603 (IPDETLVFAPEKALRRVITFTHYMPGWWSDNMHSKAVQQEFCSLYSYR) the chain is Cytoplasmic. An intramembrane segment occupies 604-624 (IVNLLWEILGILLTPVLLFFT). Topologically, residues 625 to 702 (FPSCSQDIVD…NTEAPRRDLR (78 aa)) are cytoplasmic.

The protein belongs to the ATG9 family. As to quaternary structure, homotrimer; forms a homotrimer with a central pore that forms a path between the two membrane leaflets. Interacts with ctl1. Post-translationally, phosphorylated by atg1. Atg1 phosphorylation is required for preautophagosome elongation.

It localises to the preautophagosomal structure membrane. The protein resides in the cytoplasmic vesicle membrane. The protein localises to the golgi apparatus membrane. It is found in the endoplasmic reticulum membrane. It catalyses the reaction a 1,2-diacyl-sn-glycero-3-phosphocholine(in) = a 1,2-diacyl-sn-glycero-3-phosphocholine(out). The enzyme catalyses a 1,2-diacyl-sn-glycero-3-phospho-L-serine(in) = a 1,2-diacyl-sn-glycero-3-phospho-L-serine(out). The catalysed reaction is a 1,2-diacyl-sn-glycero-3-phosphoethanolamine(in) = a 1,2-diacyl-sn-glycero-3-phosphoethanolamine(out). It carries out the reaction a 1,2-diacyl-sn-glycero-3-phospho-(1D-myo-inositol-3-phosphate)(in) = a 1,2-diacyl-sn-glycero-3-phospho-(1D-myo-inositol-3-phosphate)(out). Functionally, phospholipid scramblase involved in autophagy and cytoplasm to vacuole transport (Cvt) vesicle formation. Cycles between the preautophagosomal structure/phagophore assembly site (PAS) and the cytoplasmic vesicle pool and supplies membrane for the growing autophagosome. Lipid scramblase activity plays a key role in preautophagosomal structure/phagophore assembly by distributing the phospholipids that arrive through atg2 from the cytoplasmic to the luminal leaflet of the bilayer, thereby driving autophagosomal membrane expansion. Also involved in endoplasmic reticulum-specific autophagic process and is essential for the survival of cells subjected to severe ER stress. Different machineries are required for anterograde trafficking to the PAS during either the Cvt pathway or bulk autophagy and for retrograde trafficking. Has a role in meiosis and sporulation. This chain is Autophagy-related protein 9, found in Schizosaccharomyces pombe (strain 972 / ATCC 24843) (Fission yeast).